We begin with the raw amino-acid sequence, 469 residues long: Tubulin gamma-2 chain (469 aa).

142–148 (AGGTGSG) is a binding site for GTP.

Belongs to the tubulin family.

It is found in the cytoplasm. Its subcellular location is the cytoskeleton. The protein localises to the microtubule organizing center. Its function is as follows. Tubulin is the major constituent of microtubules. The gamma chain is found at microtubule organizing centers (MTOC) such as the spindle poles, suggesting that it is involved in the minus-end nucleation of microtubule assembly. The protein is Tubulin gamma-2 chain (TUBG2) of Zea mays (Maize).